Consider the following 434-residue polypeptide: Methylenetetrahydrofolate--tRNA-(uracil-5-)-methyltransferase TrmFO (434 aa).

10–15 (GAGLAG) serves as a coordination point for FAD.

Belongs to the MnmG family. TrmFO subfamily. The cofactor is FAD.

It is found in the cytoplasm. The enzyme catalyses uridine(54) in tRNA + (6R)-5,10-methylene-5,6,7,8-tetrahydrofolate + NADH + H(+) = 5-methyluridine(54) in tRNA + (6S)-5,6,7,8-tetrahydrofolate + NAD(+). It catalyses the reaction uridine(54) in tRNA + (6R)-5,10-methylene-5,6,7,8-tetrahydrofolate + NADPH + H(+) = 5-methyluridine(54) in tRNA + (6S)-5,6,7,8-tetrahydrofolate + NADP(+). Catalyzes the folate-dependent formation of 5-methyl-uridine at position 54 (M-5-U54) in all tRNAs. In Bacillus cytotoxicus (strain DSM 22905 / CIP 110041 / 391-98 / NVH 391-98), this protein is Methylenetetrahydrofolate--tRNA-(uracil-5-)-methyltransferase TrmFO.